The following is a 508-amino-acid chain: UBX domain-containing protein 4 (508 aa).

An interaction with UBQLN1 region spans residues 1–200 (MLWFQGAIPA…PAEDLNIRVE (200 aa)). Topologically, residues 1–413 (MLWFQGAIPA…VHSSSGDIWT (413 aa)) are cytoplasmic. Polar residues-rich tracts occupy residues 117–151 (SETS…QSRN) and 160–187 (TSDT…SGCS). Residues 117–196 (SETSVANGSQ…SDQRPAEDLN (80 aa)) form a disordered region. One can recognise a UBX domain in the interval 315–393 (ERSTVARIQF…ELAPSASVVL (79 aa)). An intramembrane segment occupies 414 to 434 (LLGTVLYPFLAIWRLISNFLF). Residues 435–508 (SNPPPTQTSV…TWNGNSTQQM (74 aa)) lie on the Cytoplasmic side of the membrane. The disordered stretch occupies residues 440 to 508 (TQTSVRVTSS…TWNGNSTQQM (69 aa)). The span at 441–458 (QTSVRVTSSEPPNPASSS) shows a compositional bias: polar residues. Over residues 459–491 (KSEKREPVRKRVLEKRGDDFKKEGKIYRLRTQD) the composition is skewed to basic and acidic residues. Thr489 is subject to Phosphothreonine. The segment covering 498-508 (NTWNGNSTQQM) has biased composition (polar residues).

Directly interacts with VCP. Interacts with UBQLN1. Forms a complex with VCP and UBQLN1. Expressed in many tissues, including heart, brain, placenta, lung, liver, skeletal muscle, kidney and pancreas. Accumulates in Alzheimer disease-afflicted brains (at protein level).

The protein localises to the endoplasmic reticulum membrane. It is found in the nucleus envelope. Its function is as follows. Involved in endoplasmic reticulum-associated protein degradation (ERAD). Acts as a platform to recruit both UBQLN1 and VCP to the ER during ERAD. This is UBX domain-containing protein 4 (UBXN4) from Homo sapiens (Human).